A 553-amino-acid polypeptide reads, in one-letter code: Zinc finger CCHC domain-containing protein 8 homolog (553 aa).

At Ser-59 the chain carries Phosphoserine. Residues 183-200 form a CCHC-type zinc finger; sequence SSCFNCGDTEHSLRDCTK. Residues Ser-292 and Ser-347 each carry the phosphoserine modification. Tyr-356 is modified (phosphotyrosine). Positions 388 to 492 are disordered; the sequence is LEEETEDPPL…APSTPFKASY (105 aa). The span at 395-409 shows a compositional bias: pro residues; it reads PPLPPSVPPPQPPPP. Ser-421 and Ser-423 each carry phosphoserine. Polar residues-rich tracts occupy residues 444–456 and 473–485; these read ASHN…SKSP and ESGN…SAPS.

This sequence belongs to the ZCCHC8 family.

It localises to the nucleus. The protein localises to the nucleoplasm. In terms of biological role, scaffolding subunit of the trimeric nuclear exosome targeting (NEXT) complex, a complex that directs a subset of non-coding short-lived RNAs for exosomal degradation. The RNA exosome is fundamental for the degradation of RNA in eukaryotic nuclei. May be involved in pre-mRNA splicing. This is Zinc finger CCHC domain-containing protein 8 homolog from Drosophila melanogaster (Fruit fly).